Here is a 467-residue protein sequence, read N- to C-terminus: Ribulose bisphosphate carboxylase large chain (467 aa).

K5 is modified (N6,N6,N6-trimethyllysine). Substrate contacts are provided by N114 and T164. K166 functions as the Proton acceptor in the catalytic mechanism. K168 contributes to the substrate binding site. Mg(2+)-binding residues include K192, D194, and E195. At K192 the chain carries N6-carboxylysine. The Proton acceptor role is filled by H285. 3 residues coordinate substrate: R286, H318, and S370.

This sequence belongs to the RuBisCO large chain family. Type I subfamily. As to quaternary structure, heterohexadecamer of 8 large chains and 8 small chains; disulfide-linked. The disulfide link is formed within the large subunit homodimers. Mg(2+) is required as a cofactor. The disulfide bond which can form in the large chain dimeric partners within the hexadecamer appears to be associated with oxidative stress and protein turnover.

The protein resides in the plastid. Its subcellular location is the chloroplast. It carries out the reaction 2 (2R)-3-phosphoglycerate + 2 H(+) = D-ribulose 1,5-bisphosphate + CO2 + H2O. The enzyme catalyses D-ribulose 1,5-bisphosphate + O2 = 2-phosphoglycolate + (2R)-3-phosphoglycerate + 2 H(+). Its function is as follows. RuBisCO catalyzes two reactions: the carboxylation of D-ribulose 1,5-bisphosphate, the primary event in carbon dioxide fixation, as well as the oxidative fragmentation of the pentose substrate in the photorespiration process. Both reactions occur simultaneously and in competition at the same active site. This is Ribulose bisphosphate carboxylase large chain from Hydrophyllum virginianum (Eastern waterleaf).